A 362-amino-acid chain; its full sequence is Protein BIG GRAIN 1-like D (362 aa).

Disordered regions lie at residues 22 to 113, 132 to 168, and 303 to 327; these read IDPK…TLFH, KFNR…GGRI, and VKTN…ASDS. The segment covering 23-47 has biased composition (polar residues); the sequence is DPKTQKTQPYVGSVNTTTKKQSIVT. The span at 50 to 60 shows a compositional bias: basic and acidic residues; that stretch reads VPDRKIHRDRF. A compositionally biased stretch (low complexity) spans 63–78; that stretch reads SVSSSSDSNSSIFSSS. A compositionally biased stretch (basic and acidic residues) spans 132-144; it reads KFNRHDENWENTR. Residues 309–324 are compositionally biased toward acidic residues; sequence EDYEDDDEDDDDDDVA.

This sequence belongs to the BIG GRAIN 1 (BG1) plant protein family.

It is found in the cell membrane. Involved in auxin transport. Regulator of the auxin signaling pathway. The protein is Protein BIG GRAIN 1-like D of Arabidopsis thaliana (Mouse-ear cress).